A 626-amino-acid polypeptide reads, in one-letter code: Chaperone protein HtpG (626 aa).

Residues 1-341 are a; substrate-binding; that stretch reads METKQFKAES…SEDLSLNISR (341 aa). Residues 342–552 form a b region; that stretch reads EILQHDRQLK…EGELSIEMEK (211 aa). A disordered region spans residues 490 to 509; it reads DLGIEGEEKENTSSSDDKEN. Residues 498–509 show a composition bias toward basic and acidic residues; it reads KENTSSSDDKEN. Residues 553–626 form a c region; the sequence is VLNAMPNNQN…FTNNICKIMK (74 aa).

The protein belongs to the heat shock protein 90 family. As to quaternary structure, homodimer.

It is found in the cytoplasm. Functionally, molecular chaperone. Has ATPase activity. This Clostridium botulinum (strain Loch Maree / Type A3) protein is Chaperone protein HtpG.